We begin with the raw amino-acid sequence, 161 residues long: Nucleotide-binding protein xcc-b100_3818 (161 aa).

The protein belongs to the YajQ family.

Functionally, nucleotide-binding protein. This is Nucleotide-binding protein xcc-b100_3818 from Xanthomonas campestris pv. campestris (strain B100).